The sequence spans 309 residues: uncharacterized protein (309 aa).

Disordered stretches follow at residues 1 to 94 (IGEV…RQQI) and 286 to 309 (HTRNSKFHPPAKNTPPPLEDPPRG). Residues 30–43 (PAQPPSPAPTPSRT) are compositionally biased toward pro residues. The segment covering 58-67 (RSKTPDKRSA) has biased composition (basic and acidic residues). Residues 297 to 309 (KNTPPPLEDPPRG) are compositionally biased toward pro residues.

This is an uncharacterized protein from Homo sapiens (Human).